The sequence spans 143 residues: Large ribosomal subunit protein uL13 (143 aa).

The protein belongs to the universal ribosomal protein uL13 family. In terms of assembly, part of the 50S ribosomal subunit.

Its function is as follows. This protein is one of the early assembly proteins of the 50S ribosomal subunit, although it is not seen to bind rRNA by itself. It is important during the early stages of 50S assembly. The sequence is that of Large ribosomal subunit protein uL13 from Natranaerobius thermophilus (strain ATCC BAA-1301 / DSM 18059 / JW/NM-WN-LF).